The chain runs to 251 residues: MVDQTPETTHFGYKTVAAADKAGKVAQVFHSVAGKYDLMNDLMSFGIHRLWKRFTIDCSGVRQGQRVLDLAGGTGDLAARFSRMVGEQGEVILADINDSMLKIGREKLRNMGIVGNLNYVQANAEALPFPENYFDCITIAFGLRNVTDKDKALRSMFRVLKPGGRLLVLEFSRPQFVALSKAYDAYSFHILPRIGEMVAHDGDSYRYLAESIRMHPDQETLKGMMAAAGFENTTYDNLTGGIVALHRGYKF.

Residues Thr-74, Asp-95, and 123 to 124 (NA) contribute to the S-adenosyl-L-methionine site.

This sequence belongs to the class I-like SAM-binding methyltransferase superfamily. MenG/UbiE family.

The catalysed reaction is a 2-demethylmenaquinol + S-adenosyl-L-methionine = a menaquinol + S-adenosyl-L-homocysteine + H(+). It catalyses the reaction a 2-methoxy-6-(all-trans-polyprenyl)benzene-1,4-diol + S-adenosyl-L-methionine = a 5-methoxy-2-methyl-3-(all-trans-polyprenyl)benzene-1,4-diol + S-adenosyl-L-homocysteine + H(+). The protein operates within quinol/quinone metabolism; menaquinone biosynthesis; menaquinol from 1,4-dihydroxy-2-naphthoate: step 2/2. Its pathway is cofactor biosynthesis; ubiquinone biosynthesis. In terms of biological role, methyltransferase required for the conversion of demethylmenaquinol (DMKH2) to menaquinol (MKH2) and the conversion of 2-polyprenyl-6-methoxy-1,4-benzoquinol (DDMQH2) to 2-polyprenyl-3-methyl-6-methoxy-1,4-benzoquinol (DMQH2). The protein is Ubiquinone/menaquinone biosynthesis C-methyltransferase UbiE of Edwardsiella ictaluri (strain 93-146).